A 1176-amino-acid chain; its full sequence is Serine/threonine-protein kinase pakF (1176 aa).

Low complexity-rich tracts occupy residues 1 to 19 (MSNLKLSNNNNGNQKESSS) and 32 to 52 (NLLNSFSSNNSNNNLSNSGSN). Disordered regions lie at residues 1–231 (MSNL…HESR) and 254–361 (LPST…KKTK). Residues 64–76 (QLPPNYTPPPPPH) show a composition bias toward pro residues. Residues 92–133 (LNNENSDNNNNNNNNNNNNNNNNNNNNNNNNNNNEQLARTES) adopt a coiled-coil conformation. 3 stretches are compositionally biased toward low complexity: residues 93 to 125 (NNENSDNNNNNNNNNNNNNNNNNNNNNNNNNNN), 133 to 148 (SSVSIISSSSSGSNSG), and 156 to 172 (SSNISTDDSNTTTETYS). Residues 173 to 197 (MSPNQTLNSNIDSSEQQHQDLSSSV) show a composition bias toward polar residues. A compositionally biased stretch (low complexity) spans 198 to 226 (NNNNNNNNNNNNNNNNNNNNNNNNNNNNN). Residues 254–289 (LPSTPTQQNVEIQTTNGGSSETSPNGLISPRPSNDQ) are compositionally biased toward polar residues. Residues 316–353 (SLSSSTTTPSTTSSLTSSPSSSSLAISSPNTTAATTTN) show a composition bias toward low complexity. Positions 370–383 (ISVPYNVIHKMHVD) constitute a CRIB domain. The Protein kinase domain occupies 394–646 (FILDEKLGDG…PIDLLCHPFL (253 aa)). ATP contacts are provided by residues 400-408 (LGDGAYGSV) and Lys-423. Asp-514 acts as the Proton acceptor in catalysis. Disordered stretches follow at residues 670 to 723 (IDDL…SDEL), 753 to 885 (QEEE…GNNL), 968 to 1083 (HTTS…TGRA), and 1112 to 1176 (NSNS…NIKK). 2 stretches are compositionally biased toward low complexity: residues 682–693 (SQSSSSSSPQSP) and 710–720 (SIISPIPSSPS). Composition is skewed to acidic residues over residues 767–789 (DEQDDEQDDEDDDDENEDDEDVD) and 813–844 (DQDDEEEDEEEDDEEEEEEEEDDDEINEDEEI). Residues 812–873 (SDQDDEEEDE…NKKKNKKNNL (62 aa)) adopt a coiled-coil conformation. The segment covering 852 to 870 (VRKKKNKSTKKSNKKKNKK) has biased composition (basic residues). Polar residues-rich tracts occupy residues 873–884 (LSTIGKSGSGNN) and 968–985 (HTTSQPKQMQSKLSATNL). 3 stretches are compositionally biased toward low complexity: residues 991 to 1044 (SSSP…RPNS), 1051 to 1066 (NNSSTTTTTNSNSSSS), and 1148 to 1176 (SSGSGSNSPSLSTNSSSTNSNNSVTNIKK).

Belongs to the protein kinase superfamily. STE Ser/Thr protein kinase family. STE20 subfamily. Mg(2+) serves as cofactor.

The catalysed reaction is L-seryl-[protein] + ATP = O-phospho-L-seryl-[protein] + ADP + H(+). It catalyses the reaction L-threonyl-[protein] + ATP = O-phospho-L-threonyl-[protein] + ADP + H(+). This is Serine/threonine-protein kinase pakF from Dictyostelium discoideum (Social amoeba).